Reading from the N-terminus, the 94-residue chain is uncharacterized protein (94 aa).

This is an uncharacterized protein from Haemophilus influenzae (strain ATCC 51907 / DSM 11121 / KW20 / Rd).